Reading from the N-terminus, the 471-residue chain is Alpha-amylase (471 aa).

A Pyrrolidone carboxylic acid modification is found at Q1. A disulfide bridge links C28 with C84. The Ca(2+) site is built by N98, R146, and D155. A disulfide bond links C134 and C148. R183 is a chloride binding site. Catalysis depends on D185, which acts as the Nucleophile. H189 contacts Ca(2+). E222 (proton donor) is an active-site residue. The chloride site is built by N285 and R321. Polar residues predominate over residues 326-343 (FDFTDNDQGPPQDGSGNL). The interval 326–346 (FDFTDNDQGPPQDGSGNLISP) is disordered. Intrachain disulfides connect C354/C360 and C425/C437.

It belongs to the glycosyl hydrolase 13 family. As to quaternary structure, monomer. Requires Ca(2+) as cofactor. Chloride is required as a cofactor.

The enzyme catalyses Endohydrolysis of (1-&gt;4)-alpha-D-glucosidic linkages in polysaccharides containing three or more (1-&gt;4)-alpha-linked D-glucose units.. The polypeptide is Alpha-amylase (Tenebrio molitor (Yellow mealworm beetle)).